Here is a 521-residue protein sequence, read N- to C-terminus: Aldehyde dehydrogenase, mitochondrial (521 aa).

A mitochondrion-targeting transit peptide spans Met1–Leu21. Positions Val13–Ala28 match the SIFI-degron motif. 3 positions are modified to N6-acetyllysine: Lys56, Lys77, and Lys163. Position 266–271 (Gly266–Gly271) interacts with NAD(+). Glu289 functions as the Proton acceptor in the catalytic mechanism. The active-site Nucleophile is Cys323. Lys372, Lys379, Lys387, Lys430, Lys432, Lys445, and Lys455 each carry N6-acetyllysine.

It belongs to the aldehyde dehydrogenase family. Homotetramer. Post-translationally, in response to mitochondrial stress, the precursor protein is ubiquitinated by the SIFI complex in the cytoplasm before mitochondrial import, leading to its degradation. Within the SIFI complex, UBR4 initiates ubiquitin chain that are further elongated or branched by KCMF1.

The protein localises to the mitochondrion matrix. It carries out the reaction an aldehyde + NAD(+) + H2O = a carboxylate + NADH + 2 H(+). Its pathway is alcohol metabolism; ethanol degradation; acetate from ethanol: step 2/2. Required for clearance of cellular formaldehyde, a cytotoxic and carcinogenic metabolite that induces DNA damage. The chain is Aldehyde dehydrogenase, mitochondrial (ALDH2) from Sus scrofa (Pig).